Consider the following 1073-residue polypeptide: Duffy receptor alpha form (1073 aa).

An N-terminal signal peptide occupies residues 1–21; it reads MEGKKKRPLFFLLVLLLSHKA. Over 22-1007 the chain is Extracellular; the sequence is NNVLFERMNG…YECFTKGSST (986 aa). Residues N134, N179, and N202 are each glycosylated (N-linked (GlcNAc...) asparagine). Disulfide bonds link C214/C243 and C227/C234. N252 and N348 each carry an N-linked (GlcNAc...) asparagine glycan. Intrachain disulfides connect C297–C374, C412–C429, C424–C504, and C433–C502. The tract at residues 517 to 915 is disordered; that stretch reads VKNVGSGVES…LNNRKLNRDQ (399 aa). A compositionally biased stretch (polar residues) spans 528 to 543; it reads AASSNPITEAVKSSSG. The segment covering 546-561 has biased composition (basic and acidic residues); that stretch reads KVQEDSAHKSVNKGEG. Over residues 562 to 576 the composition is skewed to polar residues; that stretch reads KSSTNEADPGSQSGA. 2 stretches are compositionally biased toward basic and acidic residues: residues 675 to 710 and 717 to 734; these read GEVH…DDRS and HTDE…KDTE. N679 carries an N-linked (GlcNAc...) asparagine glycan. The segment covering 736 to 766 has biased composition (polar residues); it reads AGGSTLTPEQNVSVASDNGNVPGSGNKQNEG. Residues N746, N779, and N788 are each glycosylated (N-linked (GlcNAc...) asparagine). Over residues 799-810 the composition is skewed to basic and acidic residues; that stretch reads GNEKDFQKHDFM. Low complexity-rich tracts occupy residues 821–843 and 851–864; these read SDHT…SSDH and SDQT…SDQT. The segment covering 867–891 has biased composition (basic and acidic residues); it reads TEGHHRDNVRNPEIKSSEDMSKGDF. A compositionally biased stretch (polar residues) spans 893–909; that stretch reads RNSNSNELYSHNNLNNR. The helical transmembrane segment at 1008–1029 threads the bilayer; the sequence is GIVYFATGGAFLIILLLFASWN. The Cytoplasmic portion of the chain corresponds to 1030–1073; sequence AASNDYEEEATFDEFVEYSDDIHRTPLMPNDIEHMQQFTPLDYS.

In terms of assembly, interacts (via region II) with human ACKR1 (via N-terminal extracellular domain). Interacts (via region II) with rhesus macaque ACKR1 (via N-terminal extracellular domain).

The protein resides in the cell membrane. The protein localises to the cytoplasmic vesicle. Its subcellular location is the secretory vesicle. It is found in the microneme. Functionally, binds to the human erythrocyte Duffy blood group determinant (ACKR1). Binds to the rhesus macaque erythrocyte Duffy blood group determinant (ACKR1). In Plasmodium knowlesi, this protein is Duffy receptor alpha form.